The primary structure comprises 457 residues: SH3 domain-binding protein 5 (457 aa).

The segment covering 1–12 (MDTALKRSRSEE) has biased composition (basic and acidic residues). Positions 1 to 68 (MDTALKRSRS…DDINRRETEL (68 aa)) are disordered. The span at 25-43 (EKEEEEERMEQGLEEEEEV) shows a compositional bias: acidic residues. A sufficient for interaction with RAB11A and for guanine nucleotide exchange activity region spans residues 33 to 267 (MEQGLEEEEE…EIHERRRSNA (235 aa)). Residues 44 to 53 (DPRIQGELEK) are compositionally biased toward basic and acidic residues. Coiled coils occupy residues 46 to 92 (RIQG…LAKK), 99 to 147 (DSKP…RLLE), 156 to 202 (AWQE…LEKK), and 213 to 257 (YFEL…RISD). Over residues 308-319 (NCGNLVSEDDSE) the composition is skewed to acidic residues. Positions 308-347 (NCGNLVSEDDSETQSVSSFSSGPTSPSEMPDQFPAVARPG) are disordered. Over residues 322 to 334 (SVSSFSSGPTSPS) the composition is skewed to low complexity. Ser-353 is modified (phosphoserine; by MAPK12 and MAPK9). The interval 371–427 (SECSGASSPECEVERGDRAEGAENKMSDKANNNRVLSSTSAGGGRSRSQSSTSLEGQ) is disordered. Phosphoserine is present on residues Ser-377 and Ser-378. Over residues 382-398 (EVERGDRAEGAENKMSD) the composition is skewed to basic and acidic residues. Residues 406–427 (LSSTSAGGGRSRSQSSTSLEGQ) show a composition bias toward low complexity. Phosphoserine is present on Ser-420. Position 423 is a phosphoserine; by MAPK12 (Ser-423).

This sequence belongs to the SH3BP5 family. As to quaternary structure, interacts with BTK. Interacts with all isoforms of MAPK8, MAPK9, MAPK10 and MAPK12. Interacts with GDP-bound and nucleotide-free forms of RAB11A.

It localises to the cytoplasmic vesicle membrane. The protein resides in the mitochondrion. Its function is as follows. Functions as a guanine nucleotide exchange factor (GEF) with specificity for RAB11A and RAB25. Inhibits the auto- and transphosphorylation activity of BTK. Plays a negative regulatory role in BTK-related cytoplasmic signaling in B-cells. May be involved in BCR-induced apoptotic cell death. This chain is SH3 domain-binding protein 5 (Sh3bp5), found in Rattus norvegicus (Rat).